Here is a 246-residue protein sequence, read N- to C-terminus: Trypsin V-A (246 aa).

An N-terminal signal peptide occupies residues 1-15 (MKICIFFTLLGTVAA). Residues 16–24 (FPTEDNDDR) constitute a propeptide, activation peptide. A Peptidase S1 domain is found at 25 to 244 (IVGGYTCQEH…YLNWIHQTIA (220 aa)). Disulfide bonds link Cys-31–Cys-160, Cys-49–Cys-65, Cys-133–Cys-233, Cys-140–Cys-206, Cys-171–Cys-185, and Cys-196–Cys-220. Catalysis depends on His-64, which acts as the Charge relay system. The Ca(2+) site is built by Glu-76, Asn-78, and Glu-86. Asp-108 (charge relay system) is an active-site residue. Residue Ser-200 is the Charge relay system of the active site.

It belongs to the peptidase S1 family. Ca(2+) is required as a cofactor.

The protein localises to the secreted. It is found in the extracellular space. The catalysed reaction is Preferential cleavage: Arg-|-Xaa, Lys-|-Xaa.. The polypeptide is Trypsin V-A (Rattus norvegicus (Rat)).